Here is a 594-residue protein sequence, read N- to C-terminus: Frizzled and smoothened-like protein A (594 aa).

The first 22 residues, 1-22 (MVDIRKSLFFIIFFIFYNYVNS), serve as a signal peptide directing secretion. The Extracellular segment spans residues 23–248 (QKAINSDAFC…NEWYQFKDLT (226 aa)). The FZ domain maps to 27–173 (NSDAFCQKKT…SNYDLQCLNI (147 aa)). Disulfide bonds link cysteine 32/cysteine 98 and cysteine 41/cysteine 91. 2 N-linked (GlcNAc...) asparagine glycosylation sites follow: asparagine 55 and asparagine 106. The cysteines at positions 117 and 170 are disulfide-linked. Residues asparagine 182, asparagine 189, asparagine 195, and asparagine 206 are each glycosylated (N-linked (GlcNAc...) asparagine). The chain crosses the membrane as a helical span at residues 249 to 269 (TVTGVISFVCIFFNIFIYGFL). The Cytoplasmic portion of the chain corresponds to 270 to 277 (NKKHDRHT). Residues 278 to 298 (IGILCLSFSLWCCMLSDLIVA) form a helical membrane-spanning segment. Residues 299 to 329 (SSPDYSLVCPEPGRFARIHDSRCVANGIIFQ) are Extracellular-facing. Residues 330–350 (WGAVCTTMFWSAMAIDLYLVI) traverse the membrane as a helical segment. Residues 351–361 (KKLSLPAFTVK) are Cytoplasmic-facing. A helical transmembrane segment spans residues 362-382 (YFVAAIFTLALLFTTVPLAWD). Topologically, residues 383-403 (DYGYGFGGVGCWIMSNSVQNG) are extracellular. Residues 404–424 (CFWIPMLICLLIGAVSICLII) form a helical membrane-spanning segment. Over 425 to 448 (YEIVKVFKNVGRSGISIILANARL) the chain is Cytoplasmic. A helical membrane pass occupies residues 449-469 (FGIVSFIFIEYIYLFVYHFWV). The Extracellular segment spans residues 470 to 507 (QENTEKFTQNITDWVICVQTTGSSDGCPLPKAVPYATQ). A glycan (N-linked (GlcNAc...) asparagine) is linked at asparagine 479. The chain crosses the membrane as a helical span at residues 508–528 (FIFLFFLRLLGIEVCIFYGIN). Over 529 to 594 (SRSKNIILES…SKNGGDDDDL (66 aa)) the chain is Cytoplasmic.

It belongs to the G-protein coupled receptor Fz/Smo family.

Its subcellular location is the membrane. The protein is Frizzled and smoothened-like protein A (fslA) of Dictyostelium discoideum (Social amoeba).